Here is an 82-residue protein sequence, read N- to C-terminus: Delta-actitoxin-Aeq2b 3 (82 aa).

Residues 1–19 (MNRLMILVFAAVILALASA) form the signal peptide. A propeptide spanning residues 20–26 (DEDVDIT) is cleaved from the precursor. 3 disulfides stabilise this stretch: Cys32/Cys79, Cys34/Cys69, and Cys62/Cys80.

This sequence belongs to the sea anemone sodium channel inhibitory toxin family. Type I subfamily.

It localises to the secreted. The protein resides in the nematocyst. Its function is as follows. Binds specifically to voltage-gated sodium channels (Nav), thereby delaying their inactivation during signal transduction. Causes death to crabs. The protein is Delta-actitoxin-Aeq2b 3 of Actinia equina (Beadlet anemone).